The sequence spans 86 residues: Small ribosomal subunit protein uS17 (86 aa).

The protein belongs to the universal ribosomal protein uS17 family. In terms of assembly, part of the 30S ribosomal subunit.

In terms of biological role, one of the primary rRNA binding proteins, it binds specifically to the 5'-end of 16S ribosomal RNA. The polypeptide is Small ribosomal subunit protein uS17 (Methylococcus capsulatus (strain ATCC 33009 / NCIMB 11132 / Bath)).